The sequence spans 1782 residues: Vitellogenin (1782 aa).

The signal sequence occupies residues 1-15 (MKLFVLAAIIAAVSS). The 779-residue stretch at 34–812 (WQVGKQYRYE…SEDSLLPKDF (779 aa)) folds into the Vitellogenin domain. Disordered regions lie at residues 333-367 (HYESSSSSSSSESHEFNFPEQHEHPHQSNQRSRRS) and 379-406 (VLKKRNSESSSGSSSSSADSSSTYINDD). The span at 344–358 (ESHEFNFPEQHEHPH) shows a compositional bias: basic and acidic residues. Positions 386-400 (ESSSGSSSSSADSSS) are enriched in low complexity. 5 N-linked (GlcNAc...) asparagine glycosylation sites follow: Asn-569, Asn-587, Asn-1357, Asn-1463, and Asn-1596. A VWFD domain is found at 1449–1638 (PYCSIDGTRI…AYSLNEENSD (190 aa)). A disulfide bridge connects residues Cys-1451 and Cys-1602.

In terms of assembly, heterotetramer of two heavy and two light chains. In terms of processing, glycosylated and phosphorylated. As to expression, detected in oocytes (at protein level). Produced by the fat body, where it is cleaved before being secreted into hemolymph. Sequestered then by a single class of receptor mediated endocytosis in the ovary.

It is found in the secreted. The protein resides in the cytoplasm. Its subcellular location is the cytoplasmic granule. Precursor of the egg-yolk proteins that are sources of nutrients during embryonic development. The sequence is that of Vitellogenin (VG) from Bombyx mori (Silk moth).